The following is a 118-amino-acid chain: Large ribosomal subunit protein bL20 (118 aa).

It belongs to the bacterial ribosomal protein bL20 family.

Its function is as follows. Binds directly to 23S ribosomal RNA and is necessary for the in vitro assembly process of the 50S ribosomal subunit. It is not involved in the protein synthesizing functions of that subunit. The chain is Large ribosomal subunit protein bL20 from Bacillus cytotoxicus (strain DSM 22905 / CIP 110041 / 391-98 / NVH 391-98).